An 834-amino-acid chain; its full sequence is Glycerol-3-phosphate acyltransferase (834 aa).

The HXXXXD motif signature appears at 309–314 (CHRSHI).

It belongs to the GPAT/DAPAT family.

It localises to the cell inner membrane. It catalyses the reaction sn-glycerol 3-phosphate + an acyl-CoA = a 1-acyl-sn-glycero-3-phosphate + CoA. It functions in the pathway phospholipid metabolism; CDP-diacylglycerol biosynthesis; CDP-diacylglycerol from sn-glycerol 3-phosphate: step 1/3. This is Glycerol-3-phosphate acyltransferase from Pseudomonas fluorescens (strain Pf0-1).